Consider the following 371-residue polypeptide: MNKLPQETRVVIGMSGGVDSSVAALLLKEQGYDVIGIFMKNWDDTDANGVCTATEDYNDVIEVCNQIGIPYYAVNFEKQYWDKVFTYFLDEYRAGRTPNPDVMCNKEIKFKAFLEHAIALGADYVATGHYARVAYMDGEYKMLRGVDDNKDQTYFLNQLSQEQLSKTMFPLGELKKPQIREMATEAGLATAAKKDSTGICFIGERNFKDFLSNYLPAQPGVMQTLSGEVKGKHDGLMYYTIGQRHGLGIGGNGDPWFAVGKNLKENILYVDQGFHNELLYGDEVIATNVGWVSNKAKEKEFTCTAKFRYRQADNKVTVQIVDENTVRILCDEPIRAITPGQAVVFYDGDECLGGATIDEVYHSGKKLDYLG.

ATP is bound by residues 13-20 (GMSGGVDS) and methionine 39. The interval 99–101 (NPD) is interaction with target base in tRNA. Cysteine 104 serves as the catalytic Nucleophile. Cysteine 104 and cysteine 200 are oxidised to a cystine. Residue glycine 128 participates in ATP binding. The interaction with tRNA stretch occupies residues 150 to 152 (KDQ). Cysteine 200 (cysteine persulfide intermediate) is an active-site residue. The interaction with tRNA stretch occupies residues 308–309 (RY).

Belongs to the MnmA/TRMU family.

The protein localises to the cytoplasm. It catalyses the reaction S-sulfanyl-L-cysteinyl-[protein] + uridine(34) in tRNA + AH2 + ATP = 2-thiouridine(34) in tRNA + L-cysteinyl-[protein] + A + AMP + diphosphate + H(+). Functionally, catalyzes the 2-thiolation of uridine at the wobble position (U34) of tRNA, leading to the formation of s(2)U34. The protein is tRNA-specific 2-thiouridylase MnmA of Bacillus mycoides (strain KBAB4) (Bacillus weihenstephanensis).